Reading from the N-terminus, the 339-residue chain is Ketol-acid reductoisomerase (NADP(+)) (339 aa).

One can recognise a KARI N-terminal Rossmann domain in the interval 1–182; that stretch reads MRVYYDRDAD…GGGRSGIIET (182 aa). NADP(+)-binding positions include 24–27, lysine 48, serine 51, threonine 53, and 83–86; these read YGSQ and DELQ. Residue histidine 108 is part of the active site. Glycine 134 is a binding site for NADP(+). One can recognise a KARI C-terminal knotted domain in the interval 183 to 328; that stretch reads NFKEECETDL…AKLRGMMPWI (146 aa). Positions 191, 195, 227, and 231 each coordinate Mg(2+). Residue serine 252 coordinates substrate.

Belongs to the ketol-acid reductoisomerase family. Mg(2+) serves as cofactor.

The catalysed reaction is (2R)-2,3-dihydroxy-3-methylbutanoate + NADP(+) = (2S)-2-acetolactate + NADPH + H(+). It catalyses the reaction (2R,3R)-2,3-dihydroxy-3-methylpentanoate + NADP(+) = (S)-2-ethyl-2-hydroxy-3-oxobutanoate + NADPH + H(+). Its pathway is amino-acid biosynthesis; L-isoleucine biosynthesis; L-isoleucine from 2-oxobutanoate: step 2/4. It participates in amino-acid biosynthesis; L-valine biosynthesis; L-valine from pyruvate: step 2/4. Functionally, involved in the biosynthesis of branched-chain amino acids (BCAA). Catalyzes an alkyl-migration followed by a ketol-acid reduction of (S)-2-acetolactate (S2AL) to yield (R)-2,3-dihydroxy-isovalerate. In the isomerase reaction, S2AL is rearranged via a Mg-dependent methyl migration to produce 3-hydroxy-3-methyl-2-ketobutyrate (HMKB). In the reductase reaction, this 2-ketoacid undergoes a metal-dependent reduction by NADPH to yield (R)-2,3-dihydroxy-isovalerate. The protein is Ketol-acid reductoisomerase (NADP(+)) of Sinorhizobium medicae (strain WSM419) (Ensifer medicae).